We begin with the raw amino-acid sequence, 518 residues long: Xylose import ATP-binding protein XylG (518 aa).

2 ABC transporter domains span residues 6 to 245 (LQMN…VGRE) and 262 to 507 (FEAR…LSQP). 38–45 (GENGAGKS) contacts ATP.

This sequence belongs to the ABC transporter superfamily. Xylose importer (TC 3.A.1.2.4) family. The complex is composed of two ATP-binding proteins (XylG), two transmembrane proteins (XylH) and a solute-binding protein (XylF).

It localises to the cell inner membrane. The enzyme catalyses D-xylose(out) + ATP + H2O = D-xylose(in) + ADP + phosphate + H(+). Its function is as follows. Part of the ABC transporter complex XylFGH involved in xylose import. Responsible for energy coupling to the transport system. The chain is Xylose import ATP-binding protein XylG from Pseudomonas fluorescens (strain Pf0-1).